A 100-amino-acid chain; its full sequence is MHLSPQEKDKLLIFSAALLAERRLSRGLKLNYPETIAFLSFQVLEGARDGKSVSQLMSEGTTWLSKSQVMEGIPEMVDEVQIEAVFPDGTKLVTIHNPIN.

It belongs to the urease gamma subunit family. In terms of assembly, heterotrimer of UreA (gamma), UreB (beta) and UreC (alpha) subunits. Three heterotrimers associate to form the active enzyme.

Its subcellular location is the cytoplasm. It catalyses the reaction urea + 2 H2O + H(+) = hydrogencarbonate + 2 NH4(+). The protein operates within nitrogen metabolism; urea degradation; CO(2) and NH(3) from urea (urease route): step 1/1. This Prochlorococcus marinus (strain AS9601) protein is Urease subunit gamma.